A 314-amino-acid chain; its full sequence is Coproporphyrin III ferrochelatase (314 aa).

H186 and E268 together coordinate Fe(2+).

The protein belongs to the ferrochelatase family.

The protein resides in the cytoplasm. It carries out the reaction Fe-coproporphyrin III + 2 H(+) = coproporphyrin III + Fe(2+). Its pathway is porphyrin-containing compound metabolism; protoheme biosynthesis. Functionally, involved in coproporphyrin-dependent heme b biosynthesis. Catalyzes the insertion of ferrous iron into coproporphyrin III to form Fe-coproporphyrin III. This Lactococcus lactis subsp. lactis (strain IL1403) (Streptococcus lactis) protein is Coproporphyrin III ferrochelatase.